We begin with the raw amino-acid sequence, 597 residues long: mRNA-capping enzyme (597 aa).

The interval 1-212 (MAYNKIPPRW…DEDGKKDSEP (212 aa)) is TPase. One can recognise a Tyrosine-protein phosphatase domain in the interval 25–183 (LPLKTMLGPR…FRRYGDIEEA (159 aa)). Catalysis depends on C126, which acts as the Phosphocysteine intermediate. Residues 181 to 221 (EEAPPPPVLPDWCFEDEDEEDEDEDGKKDSEPGSSASFSKR) are disordered. A compositionally biased stretch (acidic residues) spans 193-204 (CFEDEDEEDEDE). Residues 229–597 (GAIFLEGITV…PPPKRLHRPT (369 aa)) are GTase. K294 functions as the N6-GMP-lysine intermediate in the catalytic mechanism. GTP is bound by residues R299, R315, 343-345 (DGE), 458-460 (KWK), and 528-533 (RQRIDK). Residues 330–386 (RKDLRMHLSNTLLDGEMIIDKVNGQAVPRYLIYDIIKFNAQPVGDCDFNIRLQCIER) are interaction with POLR2A. The disordered stretch occupies residues 573–597 (KRKYPLDPDTELMPPPPPKRLHRPT).

This sequence in the N-terminal section; belongs to the non-receptor class of the protein-tyrosine phosphatase family. In the C-terminal section; belongs to the eukaryotic GTase family. Interacts with SUPT5H and RNMT. Interacts with POLR2A (via C-terminus); this enhances guanylyltransferase activity. Binds (via GTase domain) to the elongating phosphorylated form of RNA polymerase II; can form direct interactions with the phosphorylated POLR2A C-terminal domain and indirect interactions via bound RNA.

Its subcellular location is the nucleus. The catalysed reaction is a 5'-end triphospho-ribonucleoside in mRNA + H2O = a 5'-end diphospho-ribonucleoside in mRNA + phosphate + H(+). It catalyses the reaction a 5'-end diphospho-ribonucleoside in mRNA + GTP + H(+) = a 5'-end (5'-triphosphoguanosine)-ribonucleoside in mRNA + diphosphate. Its activity is regulated as follows. RNA triphosphatase activity is inhibited by vanadate, iodoacetate and magnesium. Its function is as follows. Bifunctional mRNA-capping enzyme exhibiting RNA 5'-triphosphate monophosphatase activity in the N-terminal part and mRNA guanylyltransferase activity in the C-terminal part. Catalyzes the first two steps of cap formation: by removing the gamma-phosphate from the 5'-triphosphate end of nascent mRNA to yield a diphosphate end, and by transferring the GMP moiety of GTP to the 5'-diphosphate terminus of RNA via a covalent enzyme-GMP reaction intermediate. The sequence is that of mRNA-capping enzyme (Rngtt) from Mus musculus (Mouse).